The following is a 348-amino-acid chain: Isopentenyl-diphosphate delta-isomerase (348 aa).

A substrate-binding site is contributed by 5 to 6 (RK). FMN contacts are provided by residues Ser-61, 62–64 (SMT), Ser-92, and Asn-120. Residue 92–94 (SMR) coordinates substrate. Gln-159 contributes to the substrate binding site. Glu-160 is a binding site for Mg(2+). FMN contacts are provided by residues Lys-189, Ser-214, Thr-219, 269–271 (GLR), and 290–291 (AR).

This sequence belongs to the IPP isomerase type 2 family. In terms of assembly, homooctamer. Dimer of tetramers. The cofactor is FMN. NADPH serves as cofactor. Mg(2+) is required as a cofactor.

The protein resides in the cytoplasm. It carries out the reaction isopentenyl diphosphate = dimethylallyl diphosphate. Functionally, involved in the biosynthesis of isoprenoids. Catalyzes the 1,3-allylic rearrangement of the homoallylic substrate isopentenyl (IPP) to its allylic isomer, dimethylallyl diphosphate (DMAPP). This is Isopentenyl-diphosphate delta-isomerase from Thermoplasma acidophilum (strain ATCC 25905 / DSM 1728 / JCM 9062 / NBRC 15155 / AMRC-C165).